The primary structure comprises 142 residues: Histone H2B (142 aa).

The span at 1 to 10 (MPPKPAEKKP) shows a compositional bias: basic and acidic residues. The interval 1–50 (MPPKPAEKKPSSTAGKAPASSAGKAPAEAAKKTSKAPAKSGEKKKATKVR) is disordered. N6-acetyllysine; alternate occurs at positions 8 and 9. Residues lysine 8 and lysine 9 each participate in a glycyl lysine isopeptide (Lys-Gly) (interchain with G-Cter in SUMO); alternate cross-link. Low complexity predominate over residues 11 to 28 (SSTAGKAPASSAGKAPAE). Lysine 24 is subject to N6-acetyllysine. The segment covering 40 to 50 (SGEKKKATKVR) has biased composition (basic and acidic residues). Lysine 137 participates in a covalent cross-link: Glycyl lysine isopeptide (Lys-Gly) (interchain with G-Cter in ubiquitin).

This sequence belongs to the histone H2B family. The nucleosome is a histone octamer containing two molecules each of H2A, H2B, H3 and H4 assembled in one H3-H4 heterotetramer and two H2A-H2B heterodimers. The octamer wraps approximately 147 bp of DNA. In terms of processing, monoubiquitinated by the UBC2-BRE1 complex to form H2BK123ub1. H2BK123ub1 gives a specific tag for epigenetic transcriptional activation and is also prerequisite for H3K4me and H3K79me formation. H2BK123ub1 also modulates the formation of double-strand breaks during meiosis and is a prerequisite for DNA-damage checkpoint activation. Post-translationally, acetylation of N-terminal lysines and particularly formation of H2BK11ac has a positive effect on transcription. Sumoylation to form H2BK6su or H2BK7su occurs preferentially near the telomeres and represses gene transcription.

It localises to the nucleus. It is found in the chromosome. Functionally, core component of nucleosome. Nucleosomes wrap and compact DNA into chromatin, limiting DNA accessibility to the cellular machineries which require DNA as a template. Histones thereby play a central role in transcription regulation, DNA repair, DNA replication and chromosomal stability. DNA accessibility is regulated via a complex set of post-translational modifications of histones, also called histone code, and nucleosome remodeling. The sequence is that of Histone H2B (HTB1) from Mycosarcoma maydis (Corn smut fungus).